The following is a 142-amino-acid chain: Small ribosomal subunit protein bS6 (142 aa).

The tract at residues 110-142 (NKKPSHAKEKHEKTEHAHSHHTEEAGSKESHSE) is disordered.

This sequence belongs to the bacterial ribosomal protein bS6 family.

Functionally, binds together with bS18 to 16S ribosomal RNA. This Helicobacter acinonychis (strain Sheeba) protein is Small ribosomal subunit protein bS6.